A 650-amino-acid polypeptide reads, in one-letter code: Probable LIM domain-containing serine/threonine-protein kinase DDB_G0287001 (650 aa).

LIM zinc-binding domains are found at residues 4–63 and 64–122; these read NNCG…KLNA and RKCF…PSDK. Disordered stretches follow at residues 118–138, 171–197, and 293–320; these read KPSD…LPGK, LSSS…SSFM, and LLNS…NLNT. The span at 173 to 188 shows a compositional bias: gly residues; that stretch reads SSGGSGNSISGSGGTN. The region spanning 386-643 is the Protein kinase domain; the sequence is VAFGDVIASG…DTLKKISESL (258 aa). ATP-binding positions include 392 to 400 and K413; that span reads IASGASGKV. D509 acts as the Proton acceptor in catalysis.

It belongs to the protein kinase superfamily. TKL Ser/Thr protein kinase family.

It catalyses the reaction L-seryl-[protein] + ATP = O-phospho-L-seryl-[protein] + ADP + H(+). It carries out the reaction L-threonyl-[protein] + ATP = O-phospho-L-threonyl-[protein] + ADP + H(+). The sequence is that of Probable LIM domain-containing serine/threonine-protein kinase DDB_G0287001 from Dictyostelium discoideum (Social amoeba).